A 68-amino-acid polypeptide reads, in one-letter code: Conotoxin Cal14.13a (68 aa).

The N-terminal stretch at 1 to 21 is a signal peptide; that stretch reads MKLCVVIVLLMLAMPFNGGEA. A propeptide spanning residues 22 to 38 is cleaved from the precursor; that stretch reads SRFFNQHARSQRSGMKT. Position 66 is a valine amide (V66).

In terms of processing, contains 2 disulfide bonds. In terms of tissue distribution, expressed by the venom duct.

It is found in the secreted. Probable neurotoxin with unknown target. Possibly targets ion channels. This chain is Conotoxin Cal14.13a, found in Californiconus californicus (California cone).